The sequence spans 90 residues: UPF0367 protein Npun_R4552 (90 aa).

This sequence belongs to the UPF0367 family.

In Nostoc punctiforme (strain ATCC 29133 / PCC 73102), this protein is UPF0367 protein Npun_R4552.